Consider the following 366-residue polypeptide: tRNA/tmRNA (uracil-C(5))-methyltransferase (366 aa).

S-adenosyl-L-methionine is bound by residues Q189, Y217, N222, E238, and D298. C323 functions as the Nucleophile in the catalytic mechanism. The Proton acceptor role is filled by E357.

Belongs to the class I-like SAM-binding methyltransferase superfamily. RNA M5U methyltransferase family. TrmA subfamily.

It carries out the reaction uridine(54) in tRNA + S-adenosyl-L-methionine = 5-methyluridine(54) in tRNA + S-adenosyl-L-homocysteine + H(+). It catalyses the reaction uridine(341) in tmRNA + S-adenosyl-L-methionine = 5-methyluridine(341) in tmRNA + S-adenosyl-L-homocysteine + H(+). Its function is as follows. Dual-specificity methyltransferase that catalyzes the formation of 5-methyluridine at position 54 (m5U54) in all tRNAs, and that of position 341 (m5U341) in tmRNA (transfer-mRNA). The chain is tRNA/tmRNA (uracil-C(5))-methyltransferase from Shewanella putrefaciens (strain CN-32 / ATCC BAA-453).